The chain runs to 214 residues: Pyridoxine/pyridoxamine 5'-phosphate oxidase (214 aa).

Residues 8 to 11 (RTNY) and K66 each bind substrate. Residues 61–66 (RIVLIK), 76–77 (FT), R82, K83, and Q105 each bind FMN. Residues Y123, R127, and S131 each contribute to the substrate site. Residues 140 to 141 (QS) and W184 contribute to the FMN site. 190 to 192 (RLH) lines the substrate pocket. R194 is an FMN binding site.

Belongs to the pyridoxamine 5'-phosphate oxidase family. Homodimer. FMN is required as a cofactor.

It catalyses the reaction pyridoxamine 5'-phosphate + O2 + H2O = pyridoxal 5'-phosphate + H2O2 + NH4(+). It carries out the reaction pyridoxine 5'-phosphate + O2 = pyridoxal 5'-phosphate + H2O2. It functions in the pathway cofactor metabolism; pyridoxal 5'-phosphate salvage; pyridoxal 5'-phosphate from pyridoxamine 5'-phosphate: step 1/1. It participates in cofactor metabolism; pyridoxal 5'-phosphate salvage; pyridoxal 5'-phosphate from pyridoxine 5'-phosphate: step 1/1. Its function is as follows. Catalyzes the oxidation of either pyridoxine 5'-phosphate (PNP) or pyridoxamine 5'-phosphate (PMP) into pyridoxal 5'-phosphate (PLP). The chain is Pyridoxine/pyridoxamine 5'-phosphate oxidase from Burkholderia pseudomallei (strain 1106a).